Here is a 92-residue protein sequence, read N- to C-terminus: UPF0237 protein MA_3235 (92 aa).

Residues 7-81 (IITVIGSDRV…KSLGVEVKVQ (75 aa)) form the ACT domain.

This sequence belongs to the UPF0237 family.

This is UPF0237 protein MA_3235 from Methanosarcina acetivorans (strain ATCC 35395 / DSM 2834 / JCM 12185 / C2A).